Here is a 375-residue protein sequence, read N- to C-terminus: MKLTKTALCTALFATFTFSANAQTYPDLPVGIKGGTGALIGDTVYVGLGSGGDKFYTLDLKDPSAQWKEIATFPGGERNQPVAAAVDGKLYVFGGLQKNEKGELQLVNDAYRYNPSDNTWMKLPTRSPRGLVGSSGASHGDKVYILGGSNLSIFNGFFQDNVAAGEDKGKKDEIVAAYFDQRPEDYFFTTELLSYEPSTNKWRNEGRIPFSGRAGAAFTIQGNDLVVVNGEIKPGLRTAETHQGKFTAKGVQWKNLPDLPAPKGKSQDGLAGALAGYSNGYYLVTGGANFPGSIKQFKEGKLHAHKGLSKAWHNEVYTLNNGKWSIVGELPMNIGYGFSVSYNNKVLLIGGETDGGKALTSVKAISYDGKKLTVE.

The signal sequence occupies residues 1-22 (MKLTKTALCTALFATFTFSANA). 7 Kelch repeats span residues 43–87 (TVYV…AAVD), 89–140 (KLYV…ASHG), 142–176 (KVYILGGSNLSIFNGFFQDNVAAGEDKGKKDEIVA), 177–222 (AYFD…TIQG), 225–273 (LVVV…LAGA), 295–344 (KQFK…SYNN), and 346–375 (VLLIGGETDGGKALTSVKAISYDGKKLTVE). Residue Glu231 is the Proton acceptor of the active site.

The protein belongs to the NanM family. In terms of assembly, homodimer.

The protein localises to the periplasm. The enzyme catalyses N-acetyl-alpha-neuraminate = N-acetyl-beta-neuraminate. Functionally, converts alpha-N-acetylneuranimic acid (Neu5Ac) to the beta-anomer, accelerating the equilibrium between the alpha- and beta-anomers. Probably facilitates sialidase-negative bacteria to compete successfully for limited amounts of extracellular Neu5Ac, which is likely taken up in the beta-anomer. In addition, the rapid removal of sialic acid from solution might be advantageous to the bacterium to damp down host responses. The sequence is that of N-acetylneuraminate epimerase from Haemophilus influenzae (strain 86-028NP).